The following is a 277-amino-acid chain: Formamidopyrimidine-DNA glycosylase (277 aa).

Proline 2 serves as the catalytic Schiff-base intermediate with DNA. Glutamate 3 functions as the Proton donor in the catalytic mechanism. Lysine 58 acts as the Proton donor; for beta-elimination activity in catalysis. Histidine 94, arginine 113, and arginine 156 together coordinate DNA. The FPG-type zinc-finger motif lies at 241–277; that stretch reads LVYGREGVPCPNCGAEHPIQRITQAGRSTFFCPTCQK. Arginine 267 (proton donor; for delta-elimination activity) is an active-site residue.

The protein belongs to the FPG family. As to quaternary structure, monomer. It depends on Zn(2+) as a cofactor.

It catalyses the reaction Hydrolysis of DNA containing ring-opened 7-methylguanine residues, releasing 2,6-diamino-4-hydroxy-5-(N-methyl)formamidopyrimidine.. It carries out the reaction 2'-deoxyribonucleotide-(2'-deoxyribose 5'-phosphate)-2'-deoxyribonucleotide-DNA = a 3'-end 2'-deoxyribonucleotide-(2,3-dehydro-2,3-deoxyribose 5'-phosphate)-DNA + a 5'-end 5'-phospho-2'-deoxyribonucleoside-DNA + H(+). Its function is as follows. Involved in base excision repair of DNA damaged by oxidation or by mutagenic agents. Acts as a DNA glycosylase that recognizes and removes damaged bases. Has a preference for oxidized purines, such as 7,8-dihydro-8-oxoguanine (8-oxoG). Has AP (apurinic/apyrimidinic) lyase activity and introduces nicks in the DNA strand. Cleaves the DNA backbone by beta-delta elimination to generate a single-strand break at the site of the removed base with both 3'- and 5'-phosphates. This is Formamidopyrimidine-DNA glycosylase from Gluconobacter oxydans (strain 621H) (Gluconobacter suboxydans).